The chain runs to 102 residues: NADH-quinone oxidoreductase subunit K (102 aa).

The next 3 helical transmembrane spans lie at leucine 5–leucine 25, isoleucine 31–phenylalanine 51, and valine 62–leucine 82.

This sequence belongs to the complex I subunit 4L family. NDH-1 is composed of 14 different subunits. Subunits NuoA, H, J, K, L, M, N constitute the membrane sector of the complex.

It is found in the cell inner membrane. It catalyses the reaction a quinone + NADH + 5 H(+)(in) = a quinol + NAD(+) + 4 H(+)(out). Functionally, NDH-1 shuttles electrons from NADH, via FMN and iron-sulfur (Fe-S) centers, to quinones in the respiratory chain. The immediate electron acceptor for the enzyme in this species is believed to be ubiquinone. Couples the redox reaction to proton translocation (for every two electrons transferred, four hydrogen ions are translocated across the cytoplasmic membrane), and thus conserves the redox energy in a proton gradient. The protein is NADH-quinone oxidoreductase subunit K of Bordetella avium (strain 197N).